The following is a 685-amino-acid chain: Iron(3+)-hydroxamate import system permease protein FhuB (685 aa).

18 consecutive transmembrane segments (helical) span residues 35–55, 87–107, 120–140, 143–163, 172–192, 222–242, 265–285, 302–322, 328–348, 373–393, 416–436, 456–476, 479–499, 504–524, 553–573, 592–612, 632–652, and 660–680; these read ALLLLALFVAACWLTWVNFSV, LAISLLVGAGLGLVGVLFQQV, VATGAQLGITVTTLWAIPGAL, QFAALTGACIVGALVFGVAWG, ILAGLVVSLYCGAINQLLVIF, QLLGGVMLTLLLLRPMTLMGL, AIVLSALLVNAVGIIGFIGLF, LMLAPLIGALILWLSDQIILW, MEVSTGSVTALIGAPLLLWLL, LAFAVAGGALLLLATWVALSF, WPRILAALMAGVMLAVAGCII, AAFGVVLMLFLVPGNAFGWLL, GSLGAAATLLIIMIAAGRGGF, MLLAGMALSTAFTMLLMMLQA, AIVMVILLAIVPLCRRWLTIL, IALLALAACLTATATMTIGPL, MPHMVISALAGGVLLVFADWC, and YQIPAGLLSSFIGAPYFIYLL.

Belongs to the binding-protein-dependent transport system permease family. FecCD subfamily. In terms of assembly, the complex is composed of two ATP-binding proteins (FhuC), a transmembrane protein (FhuB) and a solute-binding protein (FhuD).

Its subcellular location is the cell inner membrane. In terms of biological role, part of the ABC transporter complex FhuCDB involved in iron(3+)-hydroxamate import. Responsible for the translocation of the substrate across the membrane. Involved in ferrioxamine-mediated iron(III) utilization. The chain is Iron(3+)-hydroxamate import system permease protein FhuB (fhuB) from Salmonella typhimurium (strain LT2 / SGSC1412 / ATCC 700720).